The following is a 398-amino-acid chain: Probable peptidoglycan glycosyltransferase FtsW (398 aa).

Over 1–20 the chain is Cytoplasmic; sequence MSTQAIRGARGLVLKWGAGR. The helical transmembrane segment at 21–41 threads the bilayer; the sequence is FYLDTVLLSVSLGLMLFGFVM. At 42–57 the chain is on the periplasmic side; sequence VSSASLHLGEKMASDS. A helical membrane pass occupies residues 58–78; the sequence is FYFPKHQLVHILLGLAAGWGA. The Cytoplasmic segment spans residues 79–92; sequence ARVRLDTLERHSRS. A helical membrane pass occupies residues 93–113; that stretch reads LFWAGIALLVLVLIPGVGKSV. Over 114 to 121 the chain is Periplasmic; that stretch reads NGSVRWIN. A helical membrane pass occupies residues 122–142; it reads LFGLRVQVSEVFKLVAAIYVA. Topologically, residues 143–153 are cytoplasmic; the sequence is GYISRHLDTVR. A helical membrane pass occupies residues 154–174; it reads TSVKGMIFPLSLLAIGAVLLL. The Periplasmic segment spans residues 175 to 177; sequence KEP. The helical transmembrane segment at 178–198 threads the bilayer; that stretch reads DFGATAVVMATALGMLFLAGA. A topological domain (cytoplasmic) is located at residue R199. The chain crosses the membrane as a helical span at residues 200-220; the sequence is LWVFVGLLGLVAVAGTVLIYT. Topologically, residues 221–289 are periplasmic; sequence AEYRLRRVLS…LFSVIGEELG (69 aa). The chain crosses the membrane as a helical span at residues 290 to 310; sequence LWGATTVILLFAIVVWRALAI. At 311–318 the chain is on the cytoplasmic side; that stretch reads GRLAERSG. Residues 319-339 form a helical membrane-spanning segment; the sequence is NLFAAFLAYGIGIWLGLQSFI. Residues 340–355 are Periplasmic-facing; sequence NMGVNMGMLPTKGLTL. The chain crosses the membrane as a helical span at residues 356–376; sequence PLMSYGGGSMMVVCAAIGLLF. Topologically, residues 377 to 398 are cytoplasmic; sequence RIRSEAVASFLGNGRKGLWPGV.

This sequence belongs to the SEDS family. FtsW subfamily.

It is found in the cell inner membrane. The catalysed reaction is [GlcNAc-(1-&gt;4)-Mur2Ac(oyl-L-Ala-gamma-D-Glu-L-Lys-D-Ala-D-Ala)](n)-di-trans,octa-cis-undecaprenyl diphosphate + beta-D-GlcNAc-(1-&gt;4)-Mur2Ac(oyl-L-Ala-gamma-D-Glu-L-Lys-D-Ala-D-Ala)-di-trans,octa-cis-undecaprenyl diphosphate = [GlcNAc-(1-&gt;4)-Mur2Ac(oyl-L-Ala-gamma-D-Glu-L-Lys-D-Ala-D-Ala)](n+1)-di-trans,octa-cis-undecaprenyl diphosphate + di-trans,octa-cis-undecaprenyl diphosphate + H(+). It participates in cell wall biogenesis; peptidoglycan biosynthesis. In terms of biological role, peptidoglycan polymerase that is essential for cell division. This Methylococcus capsulatus (strain ATCC 33009 / NCIMB 11132 / Bath) protein is Probable peptidoglycan glycosyltransferase FtsW.